The primary structure comprises 598 residues: Dihydroxy-acid dehydratase, mitochondrial (598 aa).

A mitochondrion-targeting transit peptide spans 1-18; it reads MMFCKLLRCQNGIASKRA. C84 contacts [2Fe-2S] cluster. Position 116 (D116) interacts with Mg(2+). C157 is a [2Fe-2S] cluster binding site. D158 serves as a coordination point for Mg(2+). Residue C232 coordinates [2Fe-2S] cluster. E485 contributes to the Mg(2+) binding site. S511 functions as the Proton acceptor in the catalytic mechanism.

This sequence belongs to the IlvD/Edd family. Requires [2Fe-2S] cluster as cofactor. Mg(2+) is required as a cofactor.

It is found in the mitochondrion. It catalyses the reaction (2R)-2,3-dihydroxy-3-methylbutanoate = 3-methyl-2-oxobutanoate + H2O. It carries out the reaction (2R,3R)-2,3-dihydroxy-3-methylpentanoate = (S)-3-methyl-2-oxopentanoate + H2O. Its pathway is amino-acid biosynthesis; L-isoleucine biosynthesis; L-isoleucine from 2-oxobutanoate: step 3/4. It participates in amino-acid biosynthesis; L-valine biosynthesis; L-valine from pyruvate: step 3/4. Dihydroxyacid dehydratase that catalyzes the third step in the common pathway leading to biosynthesis of branched-chain amino acids. Catalyzes the dehydration of (2R,3R)-2,3-dihydroxy-3-methylpentanoate (2,3-dihydroxy-3-methylvalerate) into 2-oxo-3-methylpentanoate (2-oxo-3-methylvalerate) and of (2R)-2,3-dihydroxy-3-methylbutanoate (2,3-dihydroxyisovalerate) into 2-oxo-3-methylbutanoate (2-oxoisovalerate), the penultimate precursor to L-isoleucine and L-valine, respectively. The polypeptide is Dihydroxy-acid dehydratase, mitochondrial (Schizosaccharomyces pombe (strain 972 / ATCC 24843) (Fission yeast)).